The chain runs to 173 residues: Fimbrial protein PrsE (173 aa).

Positions 1–24 (MKKIRGLCLPVMLGAVLMSQHVHA) are cleaved as a signal peptide.

It is found in the secreted. It localises to the fimbrium. Its function is as follows. Fimbriae (also called pili), polar filaments radiating from the surface of the bacterium to a length of 0.5-1.5 micrometers and numbering 100-300 per cell, enable bacteria to colonize the epithelium of specific host organs. The polypeptide is Fimbrial protein PrsE (prsE) (Escherichia coli).